Reading from the N-terminus, the 908-residue chain is SH3 and PX domain-containing protein 2B (908 aa).

The region spanning 5-129 (RSIVEVKVLD…QFFETRPEDL (125 aa)) is the PX domain. Position 25 is a phosphotyrosine (Tyr-25). 2 SH3 domains span residues 152–211 (MVLE…GQDG) and 221–280 (EEEE…KNSG). Ser-279 and Ser-291 each carry phosphoserine. Disordered regions lie at residues 280–300 (GEPLPPKLGPSSPAHSGALDL) and 315–366 (ELLN…PPIP). Over residues 315-337 (ELLNNQRDGRFEGRLVPDGDVKQ) the composition is skewed to basic and acidic residues. Positions 338–347 (RSPKMRQRPP) are enriched in basic residues. An SH3 3 domain is found at 368-427 (QVEEEYYTIAEFQTTIPDGISFQAGLKVEVIEKSLSGWWYIQMEDKEGWAPATFIDKYKK). The tract at residues 455 to 832 (TENNTGPEAV…LGPRVTGKVG (378 aa)) is disordered. Basic and acidic residues-rich tracts occupy residues 486–499 (KDWKGGKEAPRKAS), 516–546 (QEEKPSLPPRKESIIKSEEELLERERQKMEP), 569–584 (LARDSRKPEPKLDKSK), 595–606 (CGHKVLAKEVKK), and 615–625 (SKAELSEEKVD). A phosphoserine mark is found at Ser-499 and Ser-528. Residue Tyr-661 is modified to Phosphotyrosine. Positions 671–684 (KSQEKALLDGESHH) are enriched in basic and acidic residues. Positions 754–764 (VVPPRRPPPPK) are enriched in pro residues. Ser-840 carries the post-translational modification Phosphoserine. The SH3 4 domain occupies 847 to 908 (PKDSLYVAVA…IPSNYLRKKP (62 aa)).

The protein belongs to the SH3PXD2 family. Interacts with NOXO1. Interacts (via SH3 domains) with NOXA1; the interaction is direct. Interacts with ADAM15. Interacts with FASLG. Phosphorylated in SRC-transformed cells. Highly expressed in the stromal-vascular fraction of white adipose tissue with moderate expression in heart, skeletal muscle and the mature adipocyte fraction of white adipose tissue. Also expressed in brain, spleen, kidney and liver. Expressed in white and brown adipose tissues, eye, lung, heart, brain, spleen, stomach, liver and skeletal muscle (at protein level). Not expressed in kidney or bone marrow.

It localises to the cytoplasm. Its subcellular location is the cell projection. It is found in the podosome. Functionally, adapter protein involved in invadopodia and podosome formation and extracellular matrix degradation. Binds matrix metalloproteinases (ADAMs), NADPH oxidases (NOXs) and phosphoinositides. Acts as an organizer protein that allows NOX1- or NOX3-dependent reactive oxygen species (ROS) generation and ROS localization. Plays a role in mitotic clonal expansion during the immediate early stage of adipocyte differentiation. This is SH3 and PX domain-containing protein 2B (Sh3pxd2b) from Mus musculus (Mouse).